We begin with the raw amino-acid sequence, 328 residues long: Malate dehydrogenase (328 aa).

13-19 (GAAGQIS) is a binding site for NAD(+). Substrate contacts are provided by arginine 94 and arginine 100. Residues asparagine 107, glutamine 114, and 131–133 (VGN) contribute to the NAD(+) site. Asparagine 133 and arginine 164 together coordinate substrate. Residue histidine 189 is the Proton acceptor of the active site.

Belongs to the LDH/MDH superfamily. MDH type 2 family.

It catalyses the reaction (S)-malate + NAD(+) = oxaloacetate + NADH + H(+). Functionally, catalyzes the reversible oxidation of malate to oxaloacetate. The protein is Malate dehydrogenase of Alcanivorax borkumensis (strain ATCC 700651 / DSM 11573 / NCIMB 13689 / SK2).